The following is an 880-amino-acid chain: Interference hedgehog (880 aa).

Positions 1–20 (MPSIVSSLLLVVLLTSPLGA) are cleaved as a signal peptide. The Extracellular portion of the chain corresponds to 21–703 (IPVLYPSPPP…SHNETFSMSP (683 aa)). 4 Ig-like C2-type domains span residues 37 to 142 (PGVR…TARL), 154 to 235 (PVTS…STSS), 251 to 339 (PYLL…FIQV), and 345 to 432 (PQIV…LQVT). Intrachain disulfides connect cysteine 60–cysteine 126, cysteine 172–cysteine 219, cysteine 275–cysteine 323, and cysteine 366–cysteine 414. N-linked (GlcNAc...) asparagine glycans are attached at residues asparagine 79, asparagine 102, and asparagine 208. Residues 435 to 468 (PIHSESTQQSDHNHSKANRGRRPAQMIPPSAPNV) form a disordered region. Asparagine 447 and asparagine 467 each carry an N-linked (GlcNAc...) asparagine glycan. Fibronectin type-III domains lie at 462 to 570 (PPSA…LQPG) and 578 to 673 (VPEM…TQRP). Heparin contacts are provided by arginine 498, lysine 504, lysine 506, and arginine 544. An N-linked (GlcNAc...) asparagine glycan is attached at asparagine 560. The interval 665-699 (LKQGRTQRPMVSTTEEATLQTGVRDTTTPSHNETF) is disordered. Positions 668–699 (GRTQRPMVSTTEEATLQTGVRDTTTPSHNETF) are enriched in polar residues. Asparagine 696 carries N-linked (GlcNAc...) asparagine glycosylation. Residues 704–724 (IVTGTIGGGAVLILFVVTTCL) form a helical membrane-spanning segment. The Cytoplasmic segment spans residues 725–880 (CMWRRRNSRA…SSGSLNSVGV (156 aa)). The segment at 797 to 880 (YFQRQPTYDY…SSGSLNSVGV (84 aa)) is disordered. Low complexity-rich tracts occupy residues 827-839 (RAGS…NNLN) and 864-880 (SSRS…SVGV).

Belongs to the immunoglobulin superfamily. IHOG family. In terms of assembly, homodimer. Heterotetramer; 2 iHog chains bind 2 hh chains when facilitated by heparin, heparin is required to promote high-affinity interactions between hh and iHog.

Its subcellular location is the membrane. Mediates response to the active Hedgehog (Hh) protein signal in embryos, functioning upstream or at the level of patched (ptc). The chain is Interference hedgehog from Drosophila ananassae (Fruit fly).